A 454-amino-acid chain; its full sequence is MNNSLWQQCAERLQSELPLQQFNTWIRPLQAKLNGETLTLFAPNIYSVDWVRDKYLKTINTYLEALCDDKVPNVVLKVGEASPTQRDSGSPQRAAATRRKTPNFSSGNTDVEVPFESNIHPEYTFDNFVEGKSNQLARAAAIQVAENPGGVYNPLFVYGGTGLGKTHLLHAVGNGIMAHKKDAKVFYIRAERFVQDMVNSIRNSSTNEFKRYYRSVDALLIDDIHFFANKKGSQEEFFHTFNALLEGNQQIIMTSDLYPKEIDGVEDRLKSRFGWGLTIAIEPPELETRVAILMRKADERGLHMPHEVAFFIAKRLRSNVRELEGALNRVVANVQLTGRPITIDFVREALRDLIAAQEKLVTIDNIQKTVAEYYNIKLADILSKRRSRSVARPRQLAMALAKELTNHSLPEIGDAFGGRDHTTVLHACRKIQELKDAQHDIKEDYRNLIRTLSS.

The interval 1–81 (MNNSLWQQCA…PNVVLKVGEA (81 aa)) is domain I, interacts with DnaA modulators. The disordered stretch occupies residues 79 to 110 (GEASPTQRDSGSPQRAAATRRKTPNFSSGNTD). Positions 81-117 (ASPTQRDSGSPQRAAATRRKTPNFSSGNTDVEVPFES) are domain II. Polar residues predominate over residues 82-91 (SPTQRDSGSP). The interval 118–334 (NIHPEYTFDN…GALNRVVANV (217 aa)) is domain III, AAA+ region. ATP is bound by residues glycine 162, glycine 164, lysine 165, and threonine 166. The tract at residues 335–454 (QLTGRPITID…YRNLIRTLSS (120 aa)) is domain IV, binds dsDNA.

The protein belongs to the DnaA family. Oligomerizes as a right-handed, spiral filament on DNA at oriC.

It is found in the cytoplasm. Its function is as follows. Plays an essential role in the initiation and regulation of chromosomal replication. ATP-DnaA binds to the origin of replication (oriC) to initiate formation of the DNA replication initiation complex once per cell cycle. Binds the DnaA box (a 9 base pair repeat at the origin) and separates the double-stranded (ds)DNA. Forms a right-handed helical filament on oriC DNA; dsDNA binds to the exterior of the filament while single-stranded (ss)DNA is stabiized in the filament's interior. The ATP-DnaA-oriC complex binds and stabilizes one strand of the AT-rich DNA unwinding element (DUE), permitting loading of DNA polymerase. After initiation quickly degrades to an ADP-DnaA complex that is not apt for DNA replication. Binds acidic phospholipids. This is Chromosomal replication initiator protein DnaA from Idiomarina loihiensis (strain ATCC BAA-735 / DSM 15497 / L2-TR).